Reading from the N-terminus, the 113-residue chain is Hydrogenase maturation factor HybF (113 aa).

Residues His2 and Glu3 each contribute to the Ni(2+) site. The Zn(2+) site is built by Cys73, Cys76, Cys89, and Cys92.

Belongs to the HypA/HybF family. HybF subfamily.

Functionally, involved in the maturation of [NiFe] hydrogenases. Required for nickel insertion into the metal center of the hydrogenase. This Escherichia coli O6:H1 (strain CFT073 / ATCC 700928 / UPEC) protein is Hydrogenase maturation factor HybF.